Here is a 133-residue protein sequence, read N- to C-terminus: Small ribosomal subunit protein uS11 (133 aa).

Belongs to the universal ribosomal protein uS11 family. In terms of assembly, part of the 30S ribosomal subunit. Interacts with proteins S7 and S18. Binds to IF-3.

In terms of biological role, located on the platform of the 30S subunit, it bridges several disparate RNA helices of the 16S rRNA. Forms part of the Shine-Dalgarno cleft in the 70S ribosome. The sequence is that of Small ribosomal subunit protein uS11 from Shouchella clausii (strain KSM-K16) (Alkalihalobacillus clausii).